The following is a 309-amino-acid chain: NAD kinase (309 aa).

The Proton acceptor role is filled by D89. NAD(+) contacts are provided by residues 89–90, 163–164, H174, R191, D193, and 204–209; these read DG, NE, and TAYSLS.

This sequence belongs to the NAD kinase family. The cofactor is a divalent metal cation.

The protein resides in the cytoplasm. The enzyme catalyses NAD(+) + ATP = ADP + NADP(+) + H(+). Functionally, involved in the regulation of the intracellular balance of NAD and NADP, and is a key enzyme in the biosynthesis of NADP. Catalyzes specifically the phosphorylation on 2'-hydroxyl of the adenosine moiety of NAD to yield NADP. The protein is NAD kinase of Shewanella piezotolerans (strain WP3 / JCM 13877).